Consider the following 505-residue polypeptide: Lysine--tRNA ligase (505 aa).

2 residues coordinate Mg(2+): Glu415 and Glu422.

The protein belongs to the class-II aminoacyl-tRNA synthetase family. As to quaternary structure, homodimer. The cofactor is Mg(2+).

It localises to the cytoplasm. The enzyme catalyses tRNA(Lys) + L-lysine + ATP = L-lysyl-tRNA(Lys) + AMP + diphosphate. The protein is Lysine--tRNA ligase of Yersinia enterocolitica serotype O:8 / biotype 1B (strain NCTC 13174 / 8081).